We begin with the raw amino-acid sequence, 369 residues long: Ribonuclease 3 (369 aa).

Residues 6 to 142 enclose the RNase III domain; it reads IGFVQSSINY…IIGAVAADCD (137 aa). Mg(2+) is bound at residue Glu-46. Residue Asp-50 is part of the active site. Mg(2+) is bound by residues Asp-128 and Glu-131. The active site involves Glu-131. Positions 272–341 constitute a DRBM domain; the sequence is NPASTLHELF…SLKLLKFIAK (70 aa).

This sequence belongs to the ribonuclease III family. In terms of assembly, homodimer. The cofactor is Mg(2+).

It localises to the cytoplasm. It carries out the reaction Endonucleolytic cleavage to 5'-phosphomonoester.. Its function is as follows. Digests double-stranded RNA. Involved in the processing of primary rRNA transcript to yield the immediate precursors to the large and small rRNAs (23S and 16S). Processes some mRNAs, and tRNAs when they are encoded in the rRNA operon. Processes pre-crRNA and tracrRNA of type II CRISPR loci if present in the organism. This chain is Ribonuclease 3 (rnc), found in Treponema succinifaciens (strain ATCC 33096 / DSM 2489 / 6091).